The sequence spans 136 residues: ATP synthase F(0) complex subunit C1, mitochondrial (136 aa).

Residues 1 to 61 constitute a mitochondrion transit peptide; sequence MQTTGALLIS…REFQTSVVSR (61 aa). A helical membrane pass occupies residues 77 to 97; the sequence is VGVAGSGAGIGTVFGSLIIGY. Lysine 104 bears the N6,N6,N6-trimethyllysine mark. Residues 112–132 traverse the membrane as a helical segment; it reads ILGFALFEAMGLFCLMVAFLI.

The protein belongs to the ATPase C chain family. In terms of assembly, homooctamer; the c-ring consists of eight c subunits forming a circle, and each subunit adopts a hairpin shape. Component of the ATP synthase complex composed at least of ATP5F1A/subunit alpha, ATP5F1B/subunit beta, ATP5MC1/subunit c (homooctomer), MT-ATP6/subunit a, MT-ATP8/subunit 8, ATP5ME/subunit e, ATP5MF/subunit f, ATP5MG/subunit g, ATP5MK/subunit k, ATP5MJ/subunit j, ATP5F1C/subunit gamma, ATP5F1D/subunit delta, ATP5F1E/subunit epsilon, ATP5PF/subunit F6, ATP5PB/subunit b, ATP5PD/subunit d, ATP5PO/subunit OSCP. ATP synthase complex consists of a soluble F(1) head domain (subunits alpha(3) and beta(3)) - the catalytic core - and a membrane F(0) domain - the membrane proton channel (subunits c, a, 8, e, f, g, k and j). These two domains are linked by a central stalk (subunits gamma, delta, and epsilon) rotating inside the F1 region and a stationary peripheral stalk (subunits F6, b, d, and OSCP). Interacts with TMEM70 (homooligomer form); this interaction facilitates the oligomer formation of subunit c/ATP5MC1 (c-ring) and the c-ring membrane insertion and also protects ATP5MC1 against intramitochondrial proteolysis. Trimethylated by ATPSCKMT at Lys-104. Methylation is required for proper incorporation of the C subunit into the ATP synthase complex and mitochondrial respiration.

Its subcellular location is the mitochondrion membrane. The enzyme catalyses H(+)(in) = H(+)(out). In terms of biological role, subunit c, of the mitochondrial membrane ATP synthase complex (F(1)F(0) ATP synthase or Complex V) that produces ATP from ADP in the presence of a proton gradient across the membrane which is generated by electron transport complexes of the respiratory chain. ATP synthase complex consist of a soluble F(1) head domain - the catalytic core - and a membrane F(1) domain - the membrane proton channel. These two domains are linked by a central stalk rotating inside the F(1) region and a stationary peripheral stalk. During catalysis, ATP synthesis in the catalytic domain of F(1) is coupled via a rotary mechanism of the central stalk subunits to proton translocation. With the subunit a (MT-ATP6), forms the proton-conducting channel in the F(0) domain, that contains two crucial half-channels (inlet and outlet) that facilitate proton movement from the mitochondrial intermembrane space (IMS) into the matrix. Protons are taken up via the inlet half-channel and released through the outlet half-channel, following a Grotthuss mechanism. This is ATP synthase F(0) complex subunit C1, mitochondrial from Sus scrofa (Pig).